Here is a 178-residue protein sequence, read N- to C-terminus: Large ribosomal subunit protein uL6 (178 aa).

Belongs to the universal ribosomal protein uL6 family. In terms of assembly, part of the 50S ribosomal subunit.

This protein binds to the 23S rRNA, and is important in its secondary structure. It is located near the subunit interface in the base of the L7/L12 stalk, and near the tRNA binding site of the peptidyltransferase center. The polypeptide is Large ribosomal subunit protein uL6 (Methanobrevibacter smithii (strain ATCC 35061 / DSM 861 / OCM 144 / PS)).